Here is a 290-residue protein sequence, read N- to C-terminus: BEL1-like homeodomain protein 11 (290 aa).

The segment at 20–36 is SR/KY domain; that stretch reads SRYAKAVQCLVEEVIDI. The tract at residues 81-152 is BELL domain; sequence ENHEIHIKIT…SLEEAIISQL (72 aa). The segment at residues 202 to 264 is a DNA-binding region (homeobox); the sequence is AWKPIRGLPE…NARVRLWKPM (63 aa).

The protein belongs to the TALE/BELL homeobox family. As to quaternary structure, may form heterodimeric complexes with TALE/KNOX proteins.

The protein resides in the nucleus. This Arabidopsis thaliana (Mouse-ear cress) protein is BEL1-like homeodomain protein 11 (BLH11).